The following is a 600-amino-acid chain: Myelin expression factor 2 (600 aa).

A disordered region spans residues 1–101; sequence MADANKAEVP…GEKKGPNRNR (101 aa). Thr-13 carries the phosphothreonine modification. Ser-17 carries the phosphoserine modification. Residues 27–42 are compositionally biased toward basic and acidic residues; it reads GEPRREPHPAEAEKQQ. Lys-53 participates in a covalent cross-link: Glycyl lysine isopeptide (Lys-Gly) (interchain with G-Cter in SUMO2). Basic and acidic residues-rich tracts occupy residues 54 to 72 and 83 to 96; these read MENDESAKEEKSDLKEKST and YSKDKNSGAGEKKG. RRM domains are found at residues 100 to 178 and 233 to 310; these read NRVF…EDPD and STIF…MDDK. The residue at position 406 (Arg-406) is an Omega-N-methylarginine. Ser-431 carries the post-translational modification Phosphoserine. Residues 523-599 enclose the RRM 3 domain; that stretch reads NQIFVRNLPF…REIDVRLDRN (77 aa).

As to quaternary structure, monomer.

The protein localises to the nucleus. Transcriptional repressor of the myelin basic protein gene (MBP). Binds to the proximal MB1 element 5'-TTGTCC-3' of the MBP promoter. Its binding to MB1 and function are inhibited by PURA. This Homo sapiens (Human) protein is Myelin expression factor 2 (MYEF2).